The sequence spans 130 residues: ATP synthase epsilon chain (130 aa).

Belongs to the ATPase epsilon chain family. In terms of assembly, F-type ATPases have 2 components, CF(1) - the catalytic core - and CF(0) - the membrane proton channel. CF(1) has five subunits: alpha(3), beta(3), gamma(1), delta(1), epsilon(1). CF(0) has three main subunits: a, b and c.

It is found in the cell inner membrane. Its function is as follows. Produces ATP from ADP in the presence of a proton gradient across the membrane. This chain is ATP synthase epsilon chain, found in Campylobacter lari (strain RM2100 / D67 / ATCC BAA-1060).